The primary structure comprises 20 residues: Photosystem II stability/assembly factor HCF136, chloroplastic (20 aa).

The protein belongs to the Ycf48 family.

Its subcellular location is the plastid. It is found in the chloroplast thylakoid lumen. Essential for photosystem II (PSII) biogenesis; required for assembly of an early intermediate in PSII assembly that includes D2 (psbD) and cytochrome b559. This Spinacia oleracea (Spinach) protein is Photosystem II stability/assembly factor HCF136, chloroplastic.